Here is a 300-residue protein sequence, read N- to C-terminus: Cation-efflux pump FieF (300 aa).

4 consecutive transmembrane segments (helical) span residues 12-32 (AAIAATAMALALLLIKIFAWW), 39-59 (ILAALVDSLVDIAASLTNLLV), 82-102 (AALAQSMFISGSALFLFLTSI), and 114-134 (PGVGIGVTVIALICTIILVTF). Zn(2+)-binding residues include D45 and D49. Positions 153 and 157 each coordinate Zn(2+). Transmembrane regions (helical) follow at residues 156-176 (SDVMMNGAILIALGLSWYGWH) and 178-198 (ADALFALGIGIYILYSALRMG).

It belongs to the cation diffusion facilitator (CDF) transporter (TC 2.A.4) family. FieF subfamily. In terms of assembly, homodimer.

It is found in the cell inner membrane. The enzyme catalyses Zn(2+)(in) + H(+)(out) = Zn(2+)(out) + H(+)(in). The catalysed reaction is Cd(2+)(in) + H(+)(out) = Cd(2+)(out) + H(+)(in). It catalyses the reaction Fe(2+)(in) + H(+)(out) = Fe(2+)(out) + H(+)(in). Functionally, divalent metal cation transporter which exports Zn(2+), Cd(2+) and possibly Fe(2+). May be involved in zinc and iron detoxification by efflux. This Salmonella arizonae (strain ATCC BAA-731 / CDC346-86 / RSK2980) protein is Cation-efflux pump FieF.